The following is a 156-amino-acid chain: 6,7-dimethyl-8-ribityllumazine synthase (156 aa).

5-amino-6-(D-ribitylamino)uracil contacts are provided by residues Phe-22, 57-59, and 81-83; these read AVE and CVI. 86 to 87 lines the (2S)-2-hydroxy-3-oxobutyl phosphate pocket; that stretch reads GT. His-89 (proton donor) is an active-site residue. Phe-114 contacts 5-amino-6-(D-ribitylamino)uracil. A (2S)-2-hydroxy-3-oxobutyl phosphate-binding site is contributed by Arg-128.

This sequence belongs to the DMRL synthase family. As to quaternary structure, forms an icosahedral capsid composed of 60 subunits, arranged as a dodecamer of pentamers.

It carries out the reaction (2S)-2-hydroxy-3-oxobutyl phosphate + 5-amino-6-(D-ribitylamino)uracil = 6,7-dimethyl-8-(1-D-ribityl)lumazine + phosphate + 2 H2O + H(+). Its pathway is cofactor biosynthesis; riboflavin biosynthesis; riboflavin from 2-hydroxy-3-oxobutyl phosphate and 5-amino-6-(D-ribitylamino)uracil: step 1/2. Functionally, catalyzes the formation of 6,7-dimethyl-8-ribityllumazine by condensation of 5-amino-6-(D-ribitylamino)uracil with 3,4-dihydroxy-2-butanone 4-phosphate. This is the penultimate step in the biosynthesis of riboflavin. The sequence is that of 6,7-dimethyl-8-ribityllumazine synthase from Vibrio cholerae serotype O1 (strain ATCC 39315 / El Tor Inaba N16961).